We begin with the raw amino-acid sequence, 387 residues long: Patatin group J-1 (387 aa).

An N-terminal signal peptide occupies residues 1–23 (MATTKSFLILIVMILATTSSTFA). In terms of domain architecture, PNPLA spans 32 to 230 (LSIDGGGIKG…TVGDPALLSL (199 aa)). The GXGXXG signature appears at 36-41 (GGGIKG). The GXSXG motif lies at 75–79 (GTSTG). Residue serine 77 is the Nucleophile of the active site. The N-linked (GlcNAc...) asparagine glycan is linked to asparagine 115. Catalysis depends on aspartate 216, which acts as the Proton acceptor. Residues 216 to 218 (DGG) carry the DGA/G motif. The stretch at 322-385 (ENALTGTTTE…NRKKLRANKA (64 aa)) forms a coiled coil.

Belongs to the patatin family. In terms of tissue distribution, tuber.

The protein resides in the vacuole. In terms of biological role, probable lipolytic acyl hydrolase (LAH), an activity which is thought to be involved in the response of tubers to pathogens. This Solanum tuberosum (Potato) protein is Patatin group J-1.